A 142-amino-acid polypeptide reads, in one-letter code: Transcriptional regulator MraZ (142 aa).

2 SpoVT-AbrB domains span residues 5–51 (ASAL…PRPE) and 77–120 (AMDV…DAQT).

Belongs to the MraZ family. Forms oligomers.

It localises to the cytoplasm. It is found in the nucleoid. This chain is Transcriptional regulator MraZ, found in Paraburkholderia phytofirmans (strain DSM 17436 / LMG 22146 / PsJN) (Burkholderia phytofirmans).